We begin with the raw amino-acid sequence, 209 residues long: N-acetyltransferase aca1 (209 aa).

Residues 26–202 (TNVKNKEELL…DAYIYQYHFP (177 aa)) form the N-acetyltransferase domain. N118 serves as a coordination point for substrate. 128 to 133 (RSKGIG) provides a ligand contact to CoA. 155-156 (NL) is a substrate binding site.

Belongs to the acetyltransferase family. As to quaternary structure, homodimer.

The protein localises to the cytoplasm. It localises to the mitochondrion. The catalysed reaction is L-glutamate 5-semialdehyde + acetyl-CoA = N-acetyl-L-glutamate 5-semialdehyde + CoA + H(+). In terms of biological role, N-acetyltransferase involved in oxidative stress resistance. Acetylates the toxic proline metabolism intermediate (S)-1-pyrroline-5-carboxylate (P5C), or more likely its spontaneously forming tautomer glutamate-5-semialdehyde (GSA) into N-acetyl-GSA for arginine synthesis in the mitochondria. P5C has been shown to increase the levels of reactive oxygen species (ROS) in the cell by inhibiting the function of the respiratory chain in the mitochondria. The enzyme is able to reduce intracellular ROS levels under P5C-induced oxidative stress and protects cells from damage by oxidative stress. Also acetylates and thereby detoxifies the proline analog azetidine-2-carboxylate (AZC), however it is unlikely that AZC is a natural substrate as it occurs only in plants belonging to the Lilaceae family. The sequence is that of N-acetyltransferase aca1 from Schizosaccharomyces pombe (strain 972 / ATCC 24843) (Fission yeast).